The chain runs to 86 residues: Small ribosomal subunit protein bS18 (86 aa).

The protein belongs to the bacterial ribosomal protein bS18 family. Part of the 30S ribosomal subunit. Forms a tight heterodimer with protein bS6.

Functionally, binds as a heterodimer with protein bS6 to the central domain of the 16S rRNA, where it helps stabilize the platform of the 30S subunit. In Protochlamydia amoebophila (strain UWE25), this protein is Small ribosomal subunit protein bS18.